A 334-amino-acid chain; its full sequence is Probable type II restriction enzyme HindVP (334 aa).

It catalyses the reaction Endonucleolytic cleavage of DNA to give specific double-stranded fragments with terminal 5'-phosphates.. Its function is as follows. A P subtype restriction enzyme that recognizes the double-stranded sequence 5'-GRCGYC-3'; the cleavage site is unknown. This chain is Probable type II restriction enzyme HindVP (hindVRP), found in Haemophilus influenzae (strain ATCC 51907 / DSM 11121 / KW20 / Rd).